We begin with the raw amino-acid sequence, 428 residues long: Histidinol dehydrogenase (428 aa).

Residues serine 234, glutamine 256, and histidine 259 each coordinate substrate. 2 residues coordinate Zn(2+): glutamine 256 and histidine 259. Catalysis depends on proton acceptor residues glutamate 323 and histidine 324. Histidine 324, aspartate 357, glutamate 411, and histidine 416 together coordinate substrate. Aspartate 357 is a Zn(2+) binding site. Histidine 416 serves as a coordination point for Zn(2+).

The protein belongs to the histidinol dehydrogenase family. Zn(2+) is required as a cofactor.

The catalysed reaction is L-histidinol + 2 NAD(+) + H2O = L-histidine + 2 NADH + 3 H(+). It functions in the pathway amino-acid biosynthesis; L-histidine biosynthesis; L-histidine from 5-phospho-alpha-D-ribose 1-diphosphate: step 9/9. Its function is as follows. Catalyzes the sequential NAD-dependent oxidations of L-histidinol to L-histidinaldehyde and then to L-histidine. The sequence is that of Histidinol dehydrogenase from Campylobacter jejuni subsp. jejuni serotype O:2 (strain ATCC 700819 / NCTC 11168).